Here is a 271-residue protein sequence, read N- to C-terminus: Tropinone reductase homolog At2g29360 (271 aa).

22 to 46 (LVTGGSKGIGEAVVEELATLGARIH) contributes to the NADP(+) binding site. S155 provides a ligand contact to substrate. Catalysis depends on Y168, which acts as the Proton acceptor.

This sequence belongs to the short-chain dehydrogenases/reductases (SDR) family. SDR65C subfamily.

In terms of biological role, oxidoreductase active on cyclic ketones, but not on tropinone or nortropinone. The sequence is that of Tropinone reductase homolog At2g29360 from Arabidopsis thaliana (Mouse-ear cress).